We begin with the raw amino-acid sequence, 241 residues long: Large ribosomal subunit protein uL2 (241 aa).

The span at 1–12 (MGKRLISQRRGR) shows a compositional bias: basic residues. Disordered stretches follow at residues 1-21 (MGKRLISQRRGRGTPTYRSAS) and 200-241 (AVDH…GKRR).

The protein belongs to the universal ribosomal protein uL2 family. As to quaternary structure, part of the 50S ribosomal subunit. Forms a bridge to the 30S subunit in the 70S ribosome.

Functionally, one of the primary rRNA binding proteins. Required for association of the 30S and 50S subunits to form the 70S ribosome, for tRNA binding and peptide bond formation. It has been suggested to have peptidyltransferase activity; this is somewhat controversial. Makes several contacts with the 16S rRNA in the 70S ribosome. The polypeptide is Large ribosomal subunit protein uL2 (Methanothermobacter thermautotrophicus (strain ATCC 29096 / DSM 1053 / JCM 10044 / NBRC 100330 / Delta H) (Methanobacterium thermoautotrophicum)).